Consider the following 185-residue polypeptide: Peptidyl-tRNA hydrolase (185 aa).

Tyrosine 14 is a binding site for tRNA. The Proton acceptor role is filled by histidine 19. TRNA-binding residues include tyrosine 65, asparagine 67, and asparagine 113.

This sequence belongs to the PTH family. In terms of assembly, monomer.

The protein localises to the cytoplasm. The catalysed reaction is an N-acyl-L-alpha-aminoacyl-tRNA + H2O = an N-acyl-L-amino acid + a tRNA + H(+). Hydrolyzes ribosome-free peptidyl-tRNAs (with 1 or more amino acids incorporated), which drop off the ribosome during protein synthesis, or as a result of ribosome stalling. Functionally, catalyzes the release of premature peptidyl moieties from peptidyl-tRNA molecules trapped in stalled 50S ribosomal subunits, and thus maintains levels of free tRNAs and 50S ribosomes. This is Peptidyl-tRNA hydrolase from Rickettsia africae (strain ESF-5).